A 412-amino-acid chain; its full sequence is Methylmalonic aciduria type A homolog, mitochondrial (412 aa).

Residues 1–15 constitute a mitochondrion transit peptide; that stretch reads MVVRALVRAHPLSRI. GTP is bound by residues 132–140, D275, and 311–313; these read GSPGVGKSS and SIM.

The protein belongs to the SIMIBI class G3E GTPase family. ArgK/MeaB subfamily.

The protein localises to the mitochondrion. Its function is as follows. May have GTPase activity. May also bind and hydrolyze ATP. May function as chaperone. Likely to have a role in propionyl-CoA metabolism and adenosylcobalamin synthesis. In Caenorhabditis briggsae, this protein is Methylmalonic aciduria type A homolog, mitochondrial.